Consider the following 329-residue polypeptide: Quinone oxidoreductase (329 aa).

The residue at position 2 (alanine 2) is an N-acetylalanine. Lysine 23 carries the N6-acetyllysine modification. Residues tyrosine 53, 158–161, glycine 181, histidine 200, asparagine 229, 246–249, and 269–271 contribute to the NADP(+) site; these read SGGV, VGSR, and VTV. Serine 248 is modified (phosphoserine). Lysine 296 carries the N6-succinyllysine modification.

It belongs to the zinc-containing alcohol dehydrogenase family. Quinone oxidoreductase subfamily. As to quaternary structure, homotetramer.

It localises to the cytoplasm. The catalysed reaction is 2 a quinone + NADPH + H(+) = 2 a 1,4-benzosemiquinone + NADP(+). Functionally, does not have alcohol dehydrogenase activity. Binds NADP and acts through a one-electron transfer process. Orthoquinones, such as 1,2-naphthoquinone or 9,10-phenanthrenequinone, are the best substrates (in vitro). May act in the detoxification of xenobiotics. Interacts with (AU)-rich elements (ARE) in the 3'-UTR of target mRNA species and enhances their stability. NADPH binding interferes with mRNA binding. This Pongo abelii (Sumatran orangutan) protein is Quinone oxidoreductase (CRYZ).